A 152-amino-acid polypeptide reads, in one-letter code: Large ribosomal subunit protein bL9 (152 aa).

It belongs to the bacterial ribosomal protein bL9 family.

Binds to the 23S rRNA. The chain is Large ribosomal subunit protein bL9 from Crocosphaera subtropica (strain ATCC 51142 / BH68) (Cyanothece sp. (strain ATCC 51142)).